The primary structure comprises 371 residues: Forkhead box protein E1 (371 aa).

A disordered region spans residues 21–53 (EERGEAAAAGAGVPAEAAGRGAGGRRRKRPLQR). Positions 26–39 (AAAAGAGVPAEAAG) are enriched in low complexity. Residues 43-52 (GGRRRKRPLQ) are compositionally biased toward basic residues. The fork-head DNA-binding region spans 55–149 (KPPYSYIALI…ESGSFLRRRK (95 aa)).

Post-translationally, phosphorylated. As to expression, expressed in Rathke pouch, in thyroid, and in the epithelium of the pharyngeal wall and arches, whereas it is absent in the epithelium of the pharyngeal pouches.

It is found in the nucleus. Transcription factor that binds consensus sites on a variety of gene promoters and activate their transcription. Involved in proper palate formation, most probably through the expression of MSX1 and TGFB3 genes which are direct targets of this transcription factor. Also implicated in thyroid gland morphogenesis. May indirectly play a role in cell growth and migration through the regulation of WNT5A expression. This Mus musculus (Mouse) protein is Forkhead box protein E1 (Foxe1).